Consider the following 452-residue polypeptide: Pup--protein ligase (452 aa).

E9 contacts Mg(2+). R53 contributes to the ATP binding site. Position 55 (Y55) interacts with Mg(2+). D57 functions as the Proton acceptor in the catalytic mechanism. Mg(2+) is bound at residue E63. Residues T66 and W419 each contribute to the ATP site.

The protein belongs to the Pup ligase/Pup deamidase family. Pup-conjugating enzyme subfamily.

The enzyme catalyses ATP + [prokaryotic ubiquitin-like protein]-L-glutamate + [protein]-L-lysine = ADP + phosphate + N(6)-([prokaryotic ubiquitin-like protein]-gamma-L-glutamyl)-[protein]-L-lysine.. It functions in the pathway protein degradation; proteasomal Pup-dependent pathway. It participates in protein modification; protein pupylation. Its function is as follows. Catalyzes the covalent attachment of the prokaryotic ubiquitin-like protein modifier Pup to the proteasomal substrate proteins, thereby targeting them for proteasomal degradation. This tagging system is termed pupylation. The ligation reaction involves the side-chain carboxylate of the C-terminal glutamate of Pup and the side-chain amino group of a substrate lysine. In Rhodococcus erythropolis (strain PR4 / NBRC 100887), this protein is Pup--protein ligase.